The chain runs to 204 residues: tRNA (pseudouridine(54)-N(1))-methyltransferase (204 aa).

The S-adenosyl-L-methionine site is built by Leu136 and Gly158.

It belongs to the methyltransferase superfamily. TrmY family. Homodimer.

It is found in the cytoplasm. The enzyme catalyses pseudouridine(54) in tRNA + S-adenosyl-L-methionine = N(1)-methylpseudouridine(54) in tRNA + S-adenosyl-L-homocysteine + H(+). Specifically catalyzes the N1-methylation of pseudouridine at position 54 (Psi54) in tRNAs. In Pyrococcus abyssi (strain GE5 / Orsay), this protein is tRNA (pseudouridine(54)-N(1))-methyltransferase.